A 420-amino-acid polypeptide reads, in one-letter code: Serine--tRNA ligase (420 aa).

229–231 contacts L-serine; that stretch reads TAE. 260-262 lines the ATP pocket; the sequence is RAE. An L-serine-binding site is contributed by Glu283. 347 to 350 contributes to the ATP binding site; it reads EISS. Ser382 provides a ligand contact to L-serine.

Belongs to the class-II aminoacyl-tRNA synthetase family. Type-1 seryl-tRNA synthetase subfamily. As to quaternary structure, homodimer. The tRNA molecule binds across the dimer.

It localises to the cytoplasm. The catalysed reaction is tRNA(Ser) + L-serine + ATP = L-seryl-tRNA(Ser) + AMP + diphosphate + H(+). It carries out the reaction tRNA(Sec) + L-serine + ATP = L-seryl-tRNA(Sec) + AMP + diphosphate + H(+). The protein operates within aminoacyl-tRNA biosynthesis; selenocysteinyl-tRNA(Sec) biosynthesis; L-seryl-tRNA(Sec) from L-serine and tRNA(Sec): step 1/1. Functionally, catalyzes the attachment of serine to tRNA(Ser). Is also able to aminoacylate tRNA(Sec) with serine, to form the misacylated tRNA L-seryl-tRNA(Sec), which will be further converted into selenocysteinyl-tRNA(Sec). The sequence is that of Serine--tRNA ligase from Caldicellulosiruptor saccharolyticus (strain ATCC 43494 / DSM 8903 / Tp8T 6331).